Reading from the N-terminus, the 862-residue chain is Protein translocase subunit SecA (862 aa).

ATP contacts are provided by residues Gln-86, 104–108 (GEGKT), and Asp-499. Positions 848, 850, 859, and 860 each coordinate Zn(2+).

This sequence belongs to the SecA family. Monomer and homodimer. Part of the essential Sec protein translocation apparatus which comprises SecA, SecYEG and auxiliary proteins SecDF-YajC and YidC. Zn(2+) serves as cofactor.

It localises to the cell inner membrane. The protein localises to the cytoplasm. It catalyses the reaction ATP + H2O + cellular proteinSide 1 = ADP + phosphate + cellular proteinSide 2.. Functionally, part of the Sec protein translocase complex. Interacts with the SecYEG preprotein conducting channel. Has a central role in coupling the hydrolysis of ATP to the transfer of proteins into and across the cell membrane, serving both as a receptor for the preprotein-SecB complex and as an ATP-driven molecular motor driving the stepwise translocation of polypeptide chains across the membrane. The polypeptide is Protein translocase subunit SecA (Ehrlichia canis (strain Jake)).